Consider the following 122-residue polypeptide: Large ribosomal subunit protein uL14 (122 aa).

The protein belongs to the universal ribosomal protein uL14 family. Part of the 50S ribosomal subunit. Forms a cluster with proteins L3 and L19. In the 70S ribosome, L14 and L19 interact and together make contacts with the 16S rRNA in bridges B5 and B8.

In terms of biological role, binds to 23S rRNA. Forms part of two intersubunit bridges in the 70S ribosome. This chain is Large ribosomal subunit protein uL14, found in Shewanella woodyi (strain ATCC 51908 / MS32).